The sequence spans 60 residues: Stress response protein YkoL (60 aa).

This is Stress response protein YkoL (ykoL) from Bacillus subtilis (strain 168).